The chain runs to 542 residues: MARYVFITGGVVSSLGKGIAAAALAALLQARGYRVRIRKLDPYLNVDPGTMSPYQHGEVFVTDDGAETDLDLGHYERFTGRPANQQDNITTGRIYRNIIEKERRGDYLGATVQVIPHVTDEIKNFVLEGNEDYDFVLCEIGGTVGDIEAMPFLEAIRQLGNELPRGTAVYIHLTLMPYIPAAGELKTKPTQHSVKELRSIGIAPDILLVRADREIPESERRKLSLFCNVRESAVIQALDVATIYDVPIAYHKEGLDSEVLSAFGIDPAPKPRMDRWEEVSNRLHNPEGEVTIAIVGKYTGLKDAYKSLIEALYHGGLANKVKVNLDWIEAEVFESEDPAPYLEKVHGILVPGGFGERGAEGKILAAKFARERKVPYFGICFGMQMACIEAARNLVGIENASSTEFGPTKEPVVGLMTEWLKGNMLEKRASAGDLGGTMRLGAYEAALKSGSKIAEIYGSTDISERHRHRYEVNIDYKERLESAGLNFAGMSPDGVLPETVEYPDHPWFIGVQYHPELKSRPFEPHPLFASFIEAAIEQSRLV.

Residues 1–265 are amidoligase domain; that stretch reads MARYVFITGG…DSEVLSAFGI (265 aa). CTP is bound at residue Ser13. Ser13 serves as a coordination point for UTP. 14–19 contacts ATP; that stretch reads SLGKGI. Tyr54 serves as a coordination point for L-glutamine. Position 71 (Asp71) interacts with ATP. The Mg(2+) site is built by Asp71 and Glu139. CTP contacts are provided by residues 146–148, 186–191, and Lys222; these read DIE and KTKPTQ. UTP-binding positions include 186–191 and Lys222; that span reads KTKPTQ. Residues 291–541 form the Glutamine amidotransferase type-1 domain; sequence TIAIVGKYTG…IEAAIEQSRL (251 aa). Gly353 serves as a coordination point for L-glutamine. Cys380 functions as the Nucleophile; for glutamine hydrolysis in the catalytic mechanism. L-glutamine contacts are provided by residues 381 to 384, Glu404, and Arg469; that span reads FGMQ. Residues His514 and Glu516 contribute to the active site.

It belongs to the CTP synthase family. In terms of assembly, homotetramer.

The catalysed reaction is UTP + L-glutamine + ATP + H2O = CTP + L-glutamate + ADP + phosphate + 2 H(+). It carries out the reaction L-glutamine + H2O = L-glutamate + NH4(+). It catalyses the reaction UTP + NH4(+) + ATP = CTP + ADP + phosphate + 2 H(+). It participates in pyrimidine metabolism; CTP biosynthesis via de novo pathway; CTP from UDP: step 2/2. Allosterically activated by GTP, when glutamine is the substrate; GTP has no effect on the reaction when ammonia is the substrate. The allosteric effector GTP functions by stabilizing the protein conformation that binds the tetrahedral intermediate(s) formed during glutamine hydrolysis. Inhibited by the product CTP, via allosteric rather than competitive inhibition. In terms of biological role, catalyzes the ATP-dependent amination of UTP to CTP with either L-glutamine or ammonia as the source of nitrogen. Regulates intracellular CTP levels through interactions with the four ribonucleotide triphosphates. In Brucella anthropi (strain ATCC 49188 / DSM 6882 / CCUG 24695 / JCM 21032 / LMG 3331 / NBRC 15819 / NCTC 12168 / Alc 37) (Ochrobactrum anthropi), this protein is CTP synthase.